Reading from the N-terminus, the 876-residue chain is Eukaryotic translation initiation factor 3 subunit C (876 aa).

Disordered stretches follow at residues 1 to 25 (MSRF…VVRA) and 154 to 233 (SXFR…IREQ). Residues 11–20 (SESESSSEDE) are compositionally biased toward acidic residues. Composition is skewed to basic and acidic residues over residues 154 to 172 (SXFR…KDSS) and 182 to 192 (KPIKEKPKPEP). Over residues 206-219 (SMDWASSSSDSSFS) the composition is skewed to low complexity. The region spanning 632–808 (FHMHINLELL…ECAILHRSEP (177 aa)) is the PCI domain. The interval 839–876 (FFQRGGAQRGEGRQRERPREGWNRRTRNRRRDDERADD) is disordered. Positions 848 to 861 (GEGRQRERPREGWN) are enriched in basic and acidic residues.

It belongs to the eIF-3 subunit C family. In terms of assembly, component of the eukaryotic translation initiation factor 3 (eIF-3) complex.

The protein localises to the cytoplasm. In terms of biological role, component of the eukaryotic translation initiation factor 3 (eIF-3) complex, which is involved in protein synthesis of a specialized repertoire of mRNAs and, together with other initiation factors, stimulates binding of mRNA and methionyl-tRNAi to the 40S ribosome. The eIF-3 complex specifically targets and initiates translation of a subset of mRNAs involved in cell proliferation. The polypeptide is Eukaryotic translation initiation factor 3 subunit C (Bombyx mori (Silk moth)).